Here is a 362-residue protein sequence, read N- to C-terminus: Putative integrase ORF3 (362 aa).

One can recognise an Integrase catalytic domain in the interval 179–359; the sequence is YEVKEIGLLQ…TPFNFLNSLS (181 aa). The Mg(2+) site is built by aspartate 190 and aspartate 256.

It belongs to the plectrovirus integrase ORF3 family.

In terms of biological role, this protein may encode an integrase, which is necessary for integration of the viral DNA into host genome. This chain is Putative integrase ORF3, found in Spiroplasma melliferum (SpV1).